We begin with the raw amino-acid sequence, 414 residues long: NAC domain-containing protein 35 (414 aa).

The segment covering 1-21 (MAIVSSTTSIIPMSNQVNNNE) has biased composition (polar residues). A disordered region spans residues 1–47 (MAIVSSTTSIIPMSNQVNNNEKGIEDNDHRGGQESHVQNEDEADDHD). Residues 22–47 (KGIEDNDHRGGQESHVQNEDEADDHD) are compositionally biased toward basic and acidic residues. Residues 51–198 (VMPGFRFHPT…EISLCRVYKR (148 aa)) form the NAC domain. Residues 149–204 (IGLKKTLVFYSGKAPKGTRTSWIMNEYRLPHHETEKYQKAEISLCRVYKRPGVEDH) mediate DNA binding. The disordered stretch occupies residues 200-251 (GVEDHPSVPRSLSTRHHNHNSSTSSRLALRQQQHHSSSSNHSDNNLNNNNNI). Over residues 233 to 251 (HHSSSSNHSDNNLNNNNNI) the composition is skewed to low complexity.

Expressed in aerial organs in early stages of seedling development.

It localises to the nucleus. Transcription factor that acts as a floral repressor. Controls flowering time by negatively regulating CONSTANS (CO) expression in a GIGANTEA (GI)-independent manner. Regulates the plant cold response by positive regulation of the cold response genes COR15A and KIN1. May coordinate cold response and flowering time. The polypeptide is NAC domain-containing protein 35 (Arabidopsis thaliana (Mouse-ear cress)).